The sequence spans 450 residues: 23S rRNA (uracil(1939)-C(5))-methyltransferase RlmD (450 aa).

The interval 1 to 22 is disordered; sequence MARNKGGLRFQPSGGARGPAIP. In terms of domain architecture, TRAM spans 20-78; that stretch reads AIPVGKKQRLTIERLAHDGRGIAHEAGMTWFVSGGLPGEELEARVLGARSKVVDARSER. C91, C97, C100, and C179 together coordinate [4Fe-4S] cluster. S-adenosyl-L-methionine-binding residues include Q283, F312, N317, E333, D360, and D381. C407 (nucleophile) is an active-site residue.

The protein belongs to the class I-like SAM-binding methyltransferase superfamily. RNA M5U methyltransferase family. RlmD subfamily.

The catalysed reaction is uridine(1939) in 23S rRNA + S-adenosyl-L-methionine = 5-methyluridine(1939) in 23S rRNA + S-adenosyl-L-homocysteine + H(+). Catalyzes the formation of 5-methyl-uridine at position 1939 (m5U1939) in 23S rRNA. The polypeptide is 23S rRNA (uracil(1939)-C(5))-methyltransferase RlmD (Pseudomonas aeruginosa (strain UCBPP-PA14)).